Consider the following 795-residue polypeptide: Myosin light chain kinase 3 (795 aa).

Serine 155 carries the phosphoserine modification. 2 disordered regions span residues 236-257 (GPGQ…ASEN) and 305-328 (SSGP…GDAL). Phosphoserine occurs at positions 351 and 432. A disordered region spans residues 367–452 (DQIPKGARPF…GPGRTEAGRL (86 aa)). The 256-residue stretch at 491–746 (VSQHEVLGGG…ATQCLKHEWL (256 aa)) folds into the Protein kinase domain. ATP is bound by residues 497–505 (LGGGRFGQV) and lysine 520. Aspartate 612 acts as the Proton acceptor in catalysis.

It belongs to the protein kinase superfamily. CAMK Ser/Thr protein kinase family. Mg(2+) serves as cofactor. Post-translationally, phosphorylated on serine residues. In terms of tissue distribution, restricted to cardiomyocytes (at protein level). Down-regulated in heart after experimental myocardial infarction at the protein level; no significant changes at the mRNA level.

The protein resides in the cytoplasm. It catalyses the reaction L-seryl-[myosin light chain] + ATP = O-phospho-L-seryl-[myosin light chain] + ADP + H(+). The enzyme catalyses L-threonyl-[myosin light chain] + ATP = O-phospho-L-threonyl-[myosin light chain] + ADP + H(+). Kinase that phosphorylates MYL2 in vitro. Has been proposed to be calmodulin-dependent, although MYL2 phosphorylation has also been observed in the presence or absence of calmodulin. Promotes sarcomere formation in cardiomyocytes and increases cardiomyocyte contractility. The sequence is that of Myosin light chain kinase 3 (Mylk3) from Mus musculus (Mouse).